The chain runs to 638 residues: LEAF RUST 10 DISEASE-RESISTANCE LOCUS RECEPTOR-LIKE PROTEIN KINASE-like 2.1 (638 aa).

The signal sequence occupies residues 1–29 (MINLSLYQTNSLSYTIIWMLFVIPSCVLS). The Extracellular portion of the chain corresponds to 30 to 264 (VDERQKHCSP…EHTCGKMGIG (235 aa)). Asn69, Asn114, Asn136, Asn204, and Asn239 each carry an N-linked (GlcNAc...) asparagine glycan. Residues 265-285 (IGLGCGFLGATLITVCLLCFF) traverse the membrane as a helical segment. The Cytoplasmic portion of the chain corresponds to 286-638 (FQKRRTSHHL…YTEVFIGSTS (353 aa)). Positions 321–609 (KLFSHTLGKG…VLEVPPKPSI (289 aa)) constitute a Protein kinase domain. ATP-binding positions include 327-335 (LGKGGFGTV) and Lys349. Phosphotyrosine is present on Tyr393. The active-site Proton acceptor is the Asp444. Position 484 is a phosphothreonine (Thr484).

This sequence belongs to the protein kinase superfamily. Ser/Thr protein kinase family.

Its subcellular location is the membrane. The catalysed reaction is L-seryl-[protein] + ATP = O-phospho-L-seryl-[protein] + ADP + H(+). The enzyme catalyses L-threonyl-[protein] + ATP = O-phospho-L-threonyl-[protein] + ADP + H(+). The sequence is that of LEAF RUST 10 DISEASE-RESISTANCE LOCUS RECEPTOR-LIKE PROTEIN KINASE-like 2.1 from Arabidopsis thaliana (Mouse-ear cress).